The following is a 2620-amino-acid chain: Ubiquitin carboxyl-terminal hydrolase 24 (2620 aa).

The 42-residue stretch at 3-44 (SEEEQHMTTLLCMGFSDPATIRKALRLAKNDINEAVALLTNE) folds into the UBA domain. The tract at residues 45-102 (RPGLDYGGYEPMDSGGGPSPGPGGGPRGDGGGDGGGGGPSRGGSTGGGGGFDPPPAYH) is disordered. The segment covering 58–95 (SGGGPSPGPGGGPRGDGGGDGGGGGPSRGGSTGGGGGF) has biased composition (gly residues). 2 positions are modified to phosphoserine: Ser63 and Ser88. Tyr942 carries the phosphotyrosine modification. 2 disordered regions span residues 1034–1054 (TSGS…SSSS) and 1129–1151 (TLLS…QQHQ). The segment covering 1131–1151 (LSESSSQSSKSPSLSSKQQHQ) has biased composition (low complexity). Ser1141 and Ser1285 each carry phosphoserine. The 354-residue stretch at 1689–2042 (VGLRNGGATC…NAYMLFYQRV (354 aa)) folds into the USP domain. The active-site Nucleophile is the Cys1698. The disordered stretch occupies residues 1921 to 1945 (ARQDSSSEVGENGRSVDQGGGGSPR). Ser1943 is modified (phosphoserine). Residue His1970 is the Proton acceptor of the active site. Ser2047, Ser2077, and Ser2561 each carry phosphoserine. The disordered stretch occupies residues 2063-2090 (AEDLSLSAPSSPEISPQSSPRPHRPNND). Residues 2069-2082 (SAPSSPEISPQSSP) show a composition bias toward low complexity. Thr2565 bears the Phosphothreonine mark. Positions 2575 to 2620 (EKEQSGSSNGSESSPANENGDRHLQQGSESPMMIGELRSDLDDVDP) are disordered. Low complexity predominate over residues 2579 to 2592 (SGSSNGSESSPANE). Ser2604 is subject to Phosphoserine. The span at 2611-2620 (LRSDLDDVDP) shows a compositional bias: basic and acidic residues.

Belongs to the peptidase C19 family. As to quaternary structure, (Microbial infection) Interacts with human cytomegalovirus protein UL38.

The catalysed reaction is Thiol-dependent hydrolysis of ester, thioester, amide, peptide and isopeptide bonds formed by the C-terminal Gly of ubiquitin (a 76-residue protein attached to proteins as an intracellular targeting signal).. In terms of biological role, ubiquitin-specific protease that regulates cell survival in various contexts through modulating the protein stability of some of its substrates including DDB2, MCL1 or TP53. Plays a positive role on ferritinophagy where ferritin is degraded in lysosomes and releases free iron. The sequence is that of Ubiquitin carboxyl-terminal hydrolase 24 (USP24) from Homo sapiens (Human).